The chain runs to 316 residues: Apolipoprotein E (316 aa).

The signal sequence occupies residues 1–18; sequence MKVLWVAVVVALLAGCQA. Thr32 carries an O-linked (GalNAc...) threonine glycan. 8 repeat units span residues 79 to 100, 101 to 122, 123 to 144, 145 to 166, 167 to 188, 189 to 210, 211 to 232, and 233 to 254. The tract at residues 79–254 is 8 X 22 AA approximate tandem repeats; the sequence is ALMEETMKEV…RLDKIRQQLE (176 aa). Met142 carries the methionine sulfoxide modification. Ser146 bears the Phosphoserine mark. The interval 157-167 is LDL and other lipoprotein receptors binding; sequence HLRKLPKRLLR. 161-164 is a heparin binding site; that stretch reads LPKR. Positions 209-289 are lipid-binding and lipoprotein association; it reads AATLSTLAGQ…SWFEPLVEDM (81 aa). Residue Thr211 is glycosylated (O-linked (GalNAc...) threonine). 228–235 provides a ligand contact to heparin; that stretch reads RQKLHGRL. The tract at residues 265-316 is homooligomerization; sequence NQMRLQAEAFQARLRSWFEPLVEDMQRQWAGLVEKVQLALRPSPTSPPSENH. The tract at residues 277–289 is specificity for association with VLDL; sequence RLRSWFEPLVEDM. O-linked (GalNAc...) threonine glycosylation occurs at Thr309. Residue Ser310 is glycosylated (O-linked (GalNAc...) serine).

The protein belongs to the apolipoprotein A1/A4/E family. Homotetramer. May interact with ABCA1; functionally associated with ABCA1 in the biogenesis of HDLs. May interact with APP/A4 amyloid-beta peptide; the interaction is extremely stable in vitro but its physiological significance is unclear. May interact with MAPT. May interact with MAP2. In the cerebrospinal fluid, interacts with secreted SORL1. Interacts with PMEL; this allows the loading of PMEL luminal fragment on ILVs to induce fibril nucleation. Post-translationally, APOE exists as multiple glycosylated and sialylated glycoforms within cells and in plasma. The extent of glycosylation and sialylation are tissue and context specific. In terms of processing, glycated in plasma VLDL. Phosphorylated by FAM20C in the extracellular medium.

The protein resides in the secreted. It is found in the extracellular space. Its subcellular location is the extracellular matrix. It localises to the extracellular vesicle. The protein localises to the endosome. The protein resides in the multivesicular body. In terms of biological role, APOE is an apolipoprotein, a protein associating with lipid particles, that mainly functions in lipoprotein-mediated lipid transport between organs via the plasma and interstitial fluids. APOE is a core component of plasma lipoproteins and is involved in their production, conversion and clearance. Apolipoproteins are amphipathic molecules that interact both with lipids of the lipoprotein particle core and the aqueous environment of the plasma. As such, APOE associates with chylomicrons, chylomicron remnants, very low density lipoproteins (VLDL) and intermediate density lipoproteins (IDL) but shows a preferential binding to high-density lipoproteins (HDL). It also binds a wide range of cellular receptors including the LDL receptor/LDLR and the very low-density lipoprotein receptor/VLDLR that mediate the cellular uptake of the APOE-containing lipoprotein particles. Finally, APOE also has a heparin-binding activity and binds heparan-sulfate proteoglycans on the surface of cells, a property that supports the capture and the receptor-mediated uptake of APOE-containing lipoproteins by cells. This Bos taurus (Bovine) protein is Apolipoprotein E (APOE).